We begin with the raw amino-acid sequence, 314 residues long: Pantothenate synthetase (314 aa).

Residue 43-50 (MGALHEGH) coordinates ATP. His50 (proton donor) is an active-site residue. Position 75 (Gln75) interacts with (R)-pantoate. Residue Gln75 participates in beta-alanine binding. The segment at 112–131 (MYPDGTRTSVHPGPLGDDLE) is disordered. Residue 161-164 (GEKD) participates in ATP binding. A (R)-pantoate-binding site is contributed by Gln167. Residues Val190 and 198–201 (LSSR) contribute to the ATP site.

This sequence belongs to the pantothenate synthetase family. As to quaternary structure, homodimer.

It localises to the cytoplasm. It carries out the reaction (R)-pantoate + beta-alanine + ATP = (R)-pantothenate + AMP + diphosphate + H(+). The protein operates within cofactor biosynthesis; (R)-pantothenate biosynthesis; (R)-pantothenate from (R)-pantoate and beta-alanine: step 1/1. Functionally, catalyzes the condensation of pantoate with beta-alanine in an ATP-dependent reaction via a pantoyl-adenylate intermediate. This chain is Pantothenate synthetase, found in Mycolicibacterium smegmatis (strain ATCC 700084 / mc(2)155) (Mycobacterium smegmatis).